Here is a 408-residue protein sequence, read N- to C-terminus: Probable E3 ubiquitin-protein ligase makorin-1 (408 aa).

2 C3H1-type zinc fingers span residues 34 to 61 (WTRH…HDLA) and 63 to 90 (SRSA…HNKP). 2 disordered regions span residues 90-114 (PLQE…SGNI) and 154-173 (EAYT…PADP). The segment covering 162 to 173 (KPDEGREEPADP) has biased composition (basic and acidic residues). The C3H1-type 3 zinc finger occupies 174–201 (ELKKQLCPYAAMGECRYGENCVYLHGDP). Residues 202 to 229 (CDMCGLQVLHPVDTCQRSQHIKSCIEAH) form a makorin-type Cys-His region. The RING-type zinc-finger motif lies at 247–301 (CGICMEVVYEKTNPSERRFGILSNCSHSYCLKCIRKWRSAKQFESKIIKSCPECR). The C3H1-type 4 zinc finger occupies 330–359 (AMSSKSCRYFDEGRGTCPFGGNCFYRHAYP). The disordered stretch occupies residues 363 to 408 (IEEPQPRQKSGMSSRYRIPSPSAGIDFGSLTSERAETRLRTRKTKL).

It catalyses the reaction S-ubiquitinyl-[E2 ubiquitin-conjugating enzyme]-L-cysteine + [acceptor protein]-L-lysine = [E2 ubiquitin-conjugating enzyme]-L-cysteine + N(6)-ubiquitinyl-[acceptor protein]-L-lysine.. Its pathway is protein modification; protein ubiquitination. Functionally, E3 ubiquitin ligase catalyzing the covalent attachment of ubiquitin moieties onto substrate proteins. In Xenopus laevis (African clawed frog), this protein is Probable E3 ubiquitin-protein ligase makorin-1 (mkrn1).